We begin with the raw amino-acid sequence, 240 residues long: Pyridoxine 5'-phosphate synthase (240 aa).

A 3-amino-2-oxopropyl phosphate-binding site is contributed by asparagine 7. 9–10 (DH) is a binding site for 1-deoxy-D-xylulose 5-phosphate. Residue arginine 18 coordinates 3-amino-2-oxopropyl phosphate. Histidine 43 functions as the Proton acceptor in the catalytic mechanism. 2 residues coordinate 1-deoxy-D-xylulose 5-phosphate: arginine 45 and histidine 50. Residue glutamate 70 is the Proton acceptor of the active site. Threonine 100 is a binding site for 1-deoxy-D-xylulose 5-phosphate. Histidine 191 serves as the catalytic Proton donor. 3-amino-2-oxopropyl phosphate-binding positions include glycine 192 and 213-214 (GH).

This sequence belongs to the PNP synthase family. Homooctamer; tetramer of dimers.

The protein resides in the cytoplasm. It carries out the reaction 3-amino-2-oxopropyl phosphate + 1-deoxy-D-xylulose 5-phosphate = pyridoxine 5'-phosphate + phosphate + 2 H2O + H(+). It functions in the pathway cofactor biosynthesis; pyridoxine 5'-phosphate biosynthesis; pyridoxine 5'-phosphate from D-erythrose 4-phosphate: step 5/5. Its function is as follows. Catalyzes the complicated ring closure reaction between the two acyclic compounds 1-deoxy-D-xylulose-5-phosphate (DXP) and 3-amino-2-oxopropyl phosphate (1-amino-acetone-3-phosphate or AAP) to form pyridoxine 5'-phosphate (PNP) and inorganic phosphate. This is Pyridoxine 5'-phosphate synthase from Synechococcus elongatus (strain ATCC 33912 / PCC 7942 / FACHB-805) (Anacystis nidulans R2).